Reading from the N-terminus, the 249-residue chain is FMN reductase (NADPH) (249 aa).

It belongs to the flavin oxidoreductase frp family. As to quaternary structure, homodimer.

The catalysed reaction is FMNH2 + NADP(+) = FMN + NADPH + 2 H(+). Functionally, reduces FMNH(2) to FMN, with NADPH as reductant. It also reduces nitroaromatic compounds, quinones and azo dyes. The sequence is that of FMN reductase (NADPH) (nfrA1) from Bacillus subtilis (strain 168).